A 213-amino-acid polypeptide reads, in one-letter code: Small ribosomal subunit protein uS3 (213 aa).

The KH type-2 domain occupies 38-106; sequence IREYLENRLS…RVHINIVEIK (69 aa).

This sequence belongs to the universal ribosomal protein uS3 family. In terms of assembly, part of the 30S ribosomal subunit. Forms a tight complex with proteins S10 and S14.

In terms of biological role, binds the lower part of the 30S subunit head. Binds mRNA in the 70S ribosome, positioning it for translation. In Oceanobacillus iheyensis (strain DSM 14371 / CIP 107618 / JCM 11309 / KCTC 3954 / HTE831), this protein is Small ribosomal subunit protein uS3.